The primary structure comprises 431 residues: Serine/threonine-protein kinase Sgk1 (431 aa).

The segment at 1 to 60 (MTVKTEAAKGTLTYSRMRGMVAILIAFMKQRRMGLNDFIQKIANNSYACKHPEVQSILKI) is necessary for localization to the mitochondria. The interval 66–92 (PELMNANPSPPPSPSQQINLGPSSNPH) is disordered. Ser-74 is subject to Phosphoserine. The residue at position 78 (Ser-78) is a Phosphoserine; by MAPK7. The span at 81-91 (QQINLGPSSNP) shows a compositional bias: polar residues. Positions 98-355 (FHFLKVIGKG…FMEIKSHVFF (258 aa)) constitute a Protein kinase domain. ATP contacts are provided by residues 104 to 112 (IGKGSFGKV) and Lys-127. A Nuclear localization signal motif is present at residues 131-141 (KKAILKKKEEK). The Proton acceptor role is filled by Asp-222. Thr-256 carries the phosphothreonine; by PDPK1 modification. One can recognise an AGC-kinase C-terminal domain in the interval 356-431 (SLINWDDLIN…SYAPPTDSFL (76 aa)). Thr-369 bears the Phosphothreonine; by PKA mark. A phosphoserine mark is found at Ser-397, Ser-401, and Ser-422.

Belongs to the protein kinase superfamily. AGC Ser/Thr protein kinase family. As to quaternary structure, homodimer; disulfide-linked. Forms a trimeric complex with FBXW7 and NOTCH1. Interacts with MAPK3/ERK1, MAPK1/ERK2, MAP2K1/MEK1, MAP2K2/MEK2, NEDD4, NEDD4L, MAPT/TAU, MAPK7, CREB1, SLC9A3R2/NHERF2 and KCNJ1/ROMK1. Associates with the mammalian target of rapamycin complex 2 (mTORC2) via an interaction with MAPKAP1/SIN1. In terms of processing, regulated by phosphorylation. Activated by phosphorylation on Ser-422 by mTORC2, transforming it into a substrate for PDPK1 which phosphorylates it on Thr-256. Phosphorylation on Ser-397 and Ser-401 are also essential for its activity. Phosphorylation on Ser-78 by MAPK7 is required for growth factor-induced cell cycle progression. Post-translationally, ubiquitinated by NEDD4L; which promotes proteasomal degradation. Ubiquitinated by SYVN1 at the endoplasmic reticulum; which promotes rapid proteasomal degradation and maintains a high turnover rate in resting cells. Isoform 2 shows enhanced stability. As to expression, expressed in most tissues with highest levels in the pancreas, followed by placenta, kidney and lung. Isoform 2 is strongly expressed in brain and pancreas, weaker in heart, placenta, lung, liver and skeletal muscle.

It is found in the cytoplasm. The protein localises to the nucleus. It localises to the endoplasmic reticulum membrane. The protein resides in the cell membrane. Its subcellular location is the mitochondrion. It catalyses the reaction L-seryl-[protein] + ATP = O-phospho-L-seryl-[protein] + ADP + H(+). The enzyme catalyses L-threonyl-[protein] + ATP = O-phospho-L-threonyl-[protein] + ADP + H(+). With respect to regulation, two specific sites, one in the kinase domain (Thr-256) and the other in the C-terminal regulatory region (Ser-422), need to be phosphorylated for its full activation. Phosphorylation at Ser-397 and Ser-401 are also essential for its activity. Activated by WNK1, WNK2, WNK3 and WNK4; which promote phosphorylation by mTORC2. Serine/threonine-protein kinase which is involved in the regulation of a wide variety of ion channels, membrane transporters, cellular enzymes, transcription factors, neuronal excitability, cell growth, proliferation, survival, migration and apoptosis. Plays an important role in cellular stress response. Contributes to regulation of renal Na(+) retention, renal K(+) elimination, salt appetite, gastric acid secretion, intestinal Na(+)/H(+) exchange and nutrient transport, insulin-dependent salt sensitivity of blood pressure, salt sensitivity of peripheral glucose uptake, cardiac repolarization and memory consolidation. Up-regulates Na(+) channels: SCNN1A/ENAC, SCN5A and ASIC1/ACCN2, K(+) channels: KCNJ1/ROMK1, KCNA1-5, KCNQ1-5 and KCNE1, epithelial Ca(2+) channels: TRPV5 and TRPV6, chloride channels: BSND, CLCN2 and CFTR, glutamate transporters: SLC1A3/EAAT1, SLC1A2 /EAAT2, SLC1A1/EAAT3, SLC1A6/EAAT4 and SLC1A7/EAAT5, amino acid transporters: SLC1A5/ASCT2, SLC38A1/SN1 and SLC6A19, creatine transporter: SLC6A8, Na(+)/dicarboxylate cotransporter: SLC13A2/NADC1, Na(+)-dependent phosphate cotransporter: SLC34A2/NAPI-2B, glutamate receptor: GRIK2/GLUR6. Up-regulates carriers: SLC9A3/NHE3, SLC12A1/NKCC2, SLC12A3/NCC, SLC5A3/SMIT, SLC2A1/GLUT1, SLC5A1/SGLT1 and SLC15A2/PEPT2. Regulates enzymes: GSK3A/B, PMM2 and Na(+)/K(+) ATPase, and transcription factors: CTNNB1 and nuclear factor NF-kappa-B. Stimulates sodium transport into epithelial cells by enhancing the stability and expression of SCNN1A/ENAC. This is achieved by phosphorylating the NEDD4L ubiquitin E3 ligase, promoting its interaction with 14-3-3 proteins, thereby preventing it from binding to SCNN1A/ENAC and targeting it for degradation. Regulates store-operated Ca(+2) entry (SOCE) by stimulating ORAI1 and STIM1. Regulates KCNJ1/ROMK1 directly via its phosphorylation or indirectly via increased interaction with SLC9A3R2/NHERF2. Phosphorylates MDM2 and activates MDM2-dependent ubiquitination of p53/TP53. Phosphorylates MAPT/TAU and mediates microtubule depolymerization and neurite formation in hippocampal neurons. Phosphorylates SLC2A4/GLUT4 and up-regulates its activity. Phosphorylates APBB1/FE65 and promotes its localization to the nucleus. Phosphorylates MAPK1/ERK2 and activates it by enhancing its interaction with MAP2K1/MEK1 and MAP2K2/MEK2. Phosphorylates FBXW7 and plays an inhibitory role in the NOTCH1 signaling. Phosphorylates FOXO1 resulting in its relocalization from the nucleus to the cytoplasm. Phosphorylates FOXO3, promoting its exit from the nucleus and interference with FOXO3-dependent transcription. Phosphorylates BRAF and MAP3K3/MEKK3 and inhibits their activity. Phosphorylates SLC9A3/NHE3 in response to dexamethasone, resulting in its activation and increased localization at the cell membrane. Phosphorylates CREB1. Necessary for vascular remodeling during angiogenesis. Sustained high levels and activity may contribute to conditions such as hypertension and diabetic nephropathy. Isoform 2 exhibited a greater effect on cell plasma membrane expression of SCNN1A/ENAC and Na(+) transport than isoform 1. The polypeptide is Serine/threonine-protein kinase Sgk1 (SGK1) (Homo sapiens (Human)).